A 245-amino-acid chain; its full sequence is MIKLVLIRHGQSLWNLENRFTGWTDVDLSENGLSEAREAGAILKKNGYTFDVAYTSVLKRAIRTLWIVLHEMDLAWIPVHKCWKLNERHYGALQGLNKDETAKKYGEEQVHIWRRSIDVRPPALTEDDPRYEMNDPRYKALKKGELPLTECLVDTEKRVLAYWHSEIAPSLKSGEKVIISSHGNTIRSLVKYLDNLSSDGVVSLNIPTSIPLVYELDDNLRPIRHYYLSMDGEVPEGEIPKHISF.

Residues 8-15 (RHGQSLWN), 21-22 (TG), arginine 60, 87-90 (ERHY), lysine 98, 114-115 (RR), and 183-184 (GN) contribute to the substrate site. Histidine 9 acts as the Tele-phosphohistidine intermediate in catalysis. Glutamate 87 acts as the Proton donor/acceptor in catalysis.

Belongs to the phosphoglycerate mutase family. BPG-dependent PGAM subfamily.

It catalyses the reaction (2R)-2-phosphoglycerate = (2R)-3-phosphoglycerate. Its pathway is carbohydrate degradation; glycolysis; pyruvate from D-glyceraldehyde 3-phosphate: step 3/5. Its function is as follows. Catalyzes the interconversion of 2-phosphoglycerate and 3-phosphoglycerate. This Bacillus cereus (strain ATCC 10987 / NRS 248) protein is 2,3-bisphosphoglycerate-dependent phosphoglycerate mutase 1.